The sequence spans 329 residues: Deoxyhypusine hydroxylase (329 aa).

HEAT-like PBS-type repeat units follow at residues 65 to 91, 99 to 124, 232 to 258, and 265 to 292; these read LKHE…VLED, RHEA…MRDD, FRHE…ALSN, and VRHE…FLND. Fe cation-binding residues include H67, E68, H100, E101, H234, E235, H267, and E268.

It belongs to the deoxyhypusine hydroxylase family. It depends on Fe(2+) as a cofactor.

It localises to the cytoplasm. Its subcellular location is the nucleus. The catalysed reaction is [eIF5A protein]-deoxyhypusine + AH2 + O2 = [eIF5A protein]-hypusine + A + H2O. It functions in the pathway protein modification; eIF5A hypusination. Functionally, catalyzes the hydroxylation of the N(6)-(4-aminobutyl)-L-lysine intermediate to form hypusine, an essential post-translational modification only found in mature eIF-5A factor. The chain is Deoxyhypusine hydroxylase from Phaeosphaeria nodorum (strain SN15 / ATCC MYA-4574 / FGSC 10173) (Glume blotch fungus).